The chain runs to 292 residues: 5,10-methylenetetrahydrofolate reductase (292 aa).

Glutamate 28 (proton donor/acceptor) is an active-site residue. Threonine 59 serves as a coordination point for NADH. FAD contacts are provided by tyrosine 60, alanine 62, histidine 88, arginine 118, glycine 119, aspartate 120, alanine 132, tyrosine 152, histidine 156, aspartate 165, asparagine 168, lysine 171, and lysine 172. Residue aspartate 120 coordinates (6S)-5-methyl-5,6,7,8-tetrahydrofolate. Glutamine 183 contacts NADH. Positions 183, 219, and 279 each coordinate (6S)-5-methyl-5,6,7,8-tetrahydrofolate.

It belongs to the methylenetetrahydrofolate reductase family. The cofactor is FAD.

The catalysed reaction is (6S)-5-methyl-5,6,7,8-tetrahydrofolate + NAD(+) = (6R)-5,10-methylene-5,6,7,8-tetrahydrofolate + NADH + H(+). The protein operates within one-carbon metabolism; tetrahydrofolate interconversion. It participates in amino-acid biosynthesis; L-methionine biosynthesis via de novo pathway. Catalyzes the NADH-dependent reduction of 5,10-methylenetetrahydrofolate to 5-methyltetrahydrofolate. Is required to provide the methyl group necessary for methionine synthetase to convert homocysteine to methionine; the methyl group is given by 5-methyltetrahydrofolate. This is 5,10-methylenetetrahydrofolate reductase (metF) from Buchnera aphidicola subsp. Schizaphis graminum (strain Sg).